A 129-amino-acid polypeptide reads, in one-letter code: Calcitonin gene-related peptide 2 (129 aa).

Residues 1–25 (MGFGKPSSFLAFSILVLCQAGSLQA) form the signal peptide. A propeptide spanning residues 26-81 (QPLRSSLESLPDPAALSEKEGRLLLAALVKAYVQRKTNELEQEQEQEMEGSSLTAQ) is cleaved from the precursor. Cys-85 and Cys-90 are joined by a disulfide. At Phe-120 the chain carries Phenylalanine amide. The propeptide occupies 126 to 129 (DLQA).

This sequence belongs to the calcitonin family.

It localises to the secreted. CALCB/CGRP2 is a peptide hormone that induces vasodilation mediated by the CALCRL-RAMP1 receptor complex. Dilates a variety of vessels including the coronary, cerebral and systemic vasculature. Its abundance in the CNS also points toward a neurotransmitter or neuromodulator role. This Equus caballus (Horse) protein is Calcitonin gene-related peptide 2 (CALCB).